Here is a 184-residue protein sequence, read N- to C-terminus: UPF0340 protein TTE0860 (184 aa).

The protein belongs to the UPF0340 family.

The chain is UPF0340 protein TTE0860 from Caldanaerobacter subterraneus subsp. tengcongensis (strain DSM 15242 / JCM 11007 / NBRC 100824 / MB4) (Thermoanaerobacter tengcongensis).